The primary structure comprises 237 residues: Uridylate kinase (237 aa).

12-15 contributes to the ATP binding site; the sequence is KLSG. An involved in allosteric activation by GTP region spans residues 20–25; that stretch reads GDEGFG. Residue G54 coordinates UMP. G55 and R59 together coordinate ATP. Residues D74 and 135 to 142 contribute to the UMP site; that span reads TGSPFFTT. Positions 162, 168, and 171 each coordinate ATP.

It belongs to the UMP kinase family. In terms of assembly, homohexamer.

It is found in the cytoplasm. It carries out the reaction UMP + ATP = UDP + ADP. Its pathway is pyrimidine metabolism; CTP biosynthesis via de novo pathway; UDP from UMP (UMPK route): step 1/1. Its activity is regulated as follows. Allosterically activated by GTP. Inhibited by UTP. Functionally, catalyzes the reversible phosphorylation of UMP to UDP. The chain is Uridylate kinase from Mannheimia succiniciproducens (strain KCTC 0769BP / MBEL55E).